Here is a 147-residue protein sequence, read N- to C-terminus: Bis(5'-nucleosyl)-tetraphosphatase [asymmetrical] (147 aa).

Alanine 2 bears the N-acetylalanine mark. Positions 2-139 (ALRACGLIIF…EMKATLQEGH (138 aa)) constitute a Nudix hydrolase domain. The Nudix box motif lies at 43-64 (GHVDPGENDLETALRETREETG).

The protein belongs to the Nudix hydrolase family. Requires a divalent metal cation as cofactor.

It carries out the reaction P(1),P(4)-bis(5'-guanosyl) tetraphosphate + H2O = GMP + GTP + 2 H(+). It catalyses the reaction a 5'-end CoA-ribonucleoside in mRNA + H2O = a 5'-end phospho-adenosine-phospho-ribonucleoside in mRNA + (R)-4'-phosphopantetheine + 2 H(+). The catalysed reaction is a 5'-end FAD-phospho-ribonucleoside in mRNA + H2O = a 5'-end phospho-adenosine-phospho-ribonucleoside in mRNA + FMN + 2 H(+). In terms of biological role, catalyzes the asymmetric hydrolysis of diadenosine 5',5'''-P1,P4-tetraphosphate (Ap4A) to yield AMP and ATP. Exhibits decapping activity towards FAD-capped RNAs and dpCoA-capped RNAs in vitro. The protein is Bis(5'-nucleosyl)-tetraphosphatase [asymmetrical] (Nudt2) of Mus musculus (Mouse).